A 354-amino-acid polypeptide reads, in one-letter code: Rhodopsin (354 aa).

At 1 to 36 (MNGTEGPNFYIPMSNKTGVVRSPFEYPQYYLAEPWK) the chain is on the extracellular side. N2 and N15 each carry an N-linked (GlcNAc...) asparagine glycan. The helical transmembrane segment at 37–61 (YSILAAYMFLLILLGFPINFMTLYV) threads the bilayer. Over 62–73 (TIQHKKLRTPLN) the chain is Cytoplasmic. Residues 74–96 (YILLNLAFANHFMVLCGFTITLY) form a helical membrane-spanning segment. Residues 97–110 (TSLHGYFVFGQSGC) are Extracellular-facing. An intrachain disulfide couples C110 to C187. The helical transmembrane segment at 111–133 (YFEGFFATLGGEIALWSLVALAI) threads the bilayer. The short motif at 134–136 (ERY) is the 'Ionic lock' involved in activated form stabilization element. The Cytoplasmic segment spans residues 134–152 (ERYIVVCKPMSNFRFGENH). The chain crosses the membrane as a helical span at residues 153–173 (AMMGVAFTWIMALACAVPPLF). Topologically, residues 174 to 202 (GWSRYIPEGMQCSCGVDYYTLKPEINNES) are extracellular. Residues 203 to 224 (FVIYMFVVHFLIPLIIITFCYG) form a helical membrane-spanning segment. The Cytoplasmic segment spans residues 225 to 252 (RLVCTVKEAAAQQQESATTQKAEKEVTR). A helical transmembrane segment spans residues 253 to 274 (MVIIMVIFFLICWVPYAYVAFY). At 275–286 (IFCNQGSEFGPI) the chain is on the extracellular side. The chain crosses the membrane as a helical span at residues 287–308 (FMTVPAFFAKSSAIYNPVIYIM). K296 is subject to N6-(retinylidene)lysine. Topologically, residues 309 to 354 (LNKQFRNCMITTLCCGKNPFGDDDASSAATSKTEATSVSTSQVSPA) are cytoplasmic. Residues C322 and C323 are each lipidated (S-palmitoyl cysteine). Positions 332–354 (DASSAATSKTEATSVSTSQVSPA) are disordered. The segment covering 334–354 (SSAATSKTEATSVSTSQVSPA) has biased composition (low complexity).

This sequence belongs to the G-protein coupled receptor 1 family. Opsin subfamily. In terms of processing, contains one covalently linked retinal chromophore. Upon light absorption, the covalently bound 11-cis-retinal is converted to all-trans-retinal. After hydrolysis of the Schiff base and release of the covalently bound all-trans-retinal, active rhodopsin is regenerated by binding of a fresh molecule of 11-cis-retinal.

It localises to the membrane. Its subcellular location is the cell projection. The protein localises to the cilium. The protein resides in the photoreceptor outer segment. Functionally, photoreceptor required for image-forming vision at low light intensity. Required for photoreceptor cell viability after birth. Light-induced isomerization of 11-cis to all-trans retinal triggers a conformational change that activates signaling via G-proteins. Subsequent receptor phosphorylation mediates displacement of the bound G-protein alpha subunit by arrestin and terminates signaling. The sequence is that of Rhodopsin (RHO) from Rana temporaria (European common frog).